A 410-amino-acid polypeptide reads, in one-letter code: Lipoyl synthase, mitochondrial (410 aa).

[4Fe-4S] cluster contacts are provided by C134, C139, C145, C165, C169, C172, and S390. Residues 148–379 form the Radical SAM core domain; it reads AGKSTAATAT…AKIGNDLGFL (232 aa).

It belongs to the radical SAM superfamily. Lipoyl synthase family. The cofactor is [4Fe-4S] cluster.

The protein localises to the mitochondrion. The enzyme catalyses [[Fe-S] cluster scaffold protein carrying a second [4Fe-4S](2+) cluster] + N(6)-octanoyl-L-lysyl-[protein] + 2 oxidized [2Fe-2S]-[ferredoxin] + 2 S-adenosyl-L-methionine + 4 H(+) = [[Fe-S] cluster scaffold protein] + N(6)-[(R)-dihydrolipoyl]-L-lysyl-[protein] + 4 Fe(3+) + 2 hydrogen sulfide + 2 5'-deoxyadenosine + 2 L-methionine + 2 reduced [2Fe-2S]-[ferredoxin]. Its pathway is protein modification; protein lipoylation via endogenous pathway; protein N(6)-(lipoyl)lysine from octanoyl-[acyl-carrier-protein]: step 2/2. In terms of biological role, catalyzes the radical-mediated insertion of two sulfur atoms into the C-6 and C-8 positions of the octanoyl moiety bound to the lipoyl domains of lipoate-dependent enzymes, thereby converting the octanoylated domains into lipoylated derivatives. The protein is Lipoyl synthase, mitochondrial of Schistosoma mansoni (Blood fluke).